A 279-amino-acid chain; its full sequence is Formamidopyrimidine-DNA glycosylase (279 aa).

Pro-2 serves as the catalytic Schiff-base intermediate with DNA. Glu-3 acts as the Proton donor in catalysis. The Proton donor; for beta-elimination activity role is filled by Lys-57. DNA contacts are provided by His-90, Arg-109, and Arg-151. The segment at 236-270 (FVYGRTGQPCRVCQTPIAVLRLGQRSTFYCPACQQ) adopts an FPG-type zinc-finger fold. The active-site Proton donor; for delta-elimination activity is the Arg-260.

This sequence belongs to the FPG family. Monomer. The cofactor is Zn(2+).

The catalysed reaction is Hydrolysis of DNA containing ring-opened 7-methylguanine residues, releasing 2,6-diamino-4-hydroxy-5-(N-methyl)formamidopyrimidine.. It catalyses the reaction 2'-deoxyribonucleotide-(2'-deoxyribose 5'-phosphate)-2'-deoxyribonucleotide-DNA = a 3'-end 2'-deoxyribonucleotide-(2,3-dehydro-2,3-deoxyribose 5'-phosphate)-DNA + a 5'-end 5'-phospho-2'-deoxyribonucleoside-DNA + H(+). Its function is as follows. Involved in base excision repair of DNA damaged by oxidation or by mutagenic agents. Acts as a DNA glycosylase that recognizes and removes damaged bases. Has a preference for oxidized purines, such as 7,8-dihydro-8-oxoguanine (8-oxoG). Has AP (apurinic/apyrimidinic) lyase activity and introduces nicks in the DNA strand. Cleaves the DNA backbone by beta-delta elimination to generate a single-strand break at the site of the removed base with both 3'- and 5'-phosphates. This Methylobacillus flagellatus (strain ATCC 51484 / DSM 6875 / VKM B-1610 / KT) protein is Formamidopyrimidine-DNA glycosylase.